Reading from the N-terminus, the 294-residue chain is Store-operated calcium entry regulator STIMATE (294 aa).

The interval 1-22 (MQGPAGNASRGLPGGPPSTVAS) is disordered. At 1 to 28 (MQGPAGNASRGLPGGPPSTVASGAGRCE) the chain is on the cytoplasmic side. A run of 3 helical transmembrane segments spans residues 29 to 49 (SGAL…VVAF), 69 to 89 (IWFL…FANV), and 102 to 122 (LYLI…YVGV). The short motif at 149-153 (GAWVG) is the GXXXG motif element. The next 2 membrane-spanning stretches (helical) occupy residues 156–176 (ALYI…LLIL) and 194–214 (LAIV…WVVD). At 215–294 (NFLMRKGKTK…KKKHRFGLPV (80 aa)) the chain is on the cytoplasmic side. Residues 227–268 (LEERGANQDSRNGSKVRYRRAASHEESESEILISADDEMEES) are disordered. A required for localization in the endoplasmic reticulum region spans residues 241-246 (KVRYRR).

This sequence belongs to the STIMATE family. Homooligomer. Interacts with STIM1. Widely expressed.

The protein localises to the endoplasmic reticulum membrane. Acts as a regulator of store-operated Ca(2+) entry (SOCE) at junctional sites that connect the endoplasmic reticulum (ER) and plasma membrane (PM), called ER-plasma membrane (ER-PM) junction or cortical ER. SOCE is a Ca(2+) influx following depletion of intracellular Ca(2+) stores. Acts by interacting with STIM1, promoting STIM1 conformational switch. Involved in STIM1 relocalization to ER-PM junctions. Contributes to the maintenance and reorganization of store-dependent ER-PM junctions. The protein is Store-operated calcium entry regulator STIMATE of Homo sapiens (Human).